Consider the following 496-residue polypeptide: MTTLTKIQVYPQVLEHRLFFRDPIRVGSRLTCRERSNRVYVHRCEKKVERKRKVEKFKGNGSWDSLKSGFLGFSKLGFLSKDEYNQKVENLEMVFSSVAVQIARYIVTMTSTGAILLIGFQLSGGDSSMNSLVWYSWLGGIIIGTMTGANMVLEDHYRAGPRNVVITGSTRGLGKALAREFLLSGDRVIVTSRSSESVDMTVKELEQNLKEIMSNASESARKKLSDAKVVGIACDVCKPEDVEKLSNFAVKELGSINIWINNAGTNKGFRPLLEFTEEDITQIVSTNLIGSILCTRGAMDVMSRQHSGGHIFNMDGAGSGGSSTPLTAVYGSTKCGLRQFHGSIVKESQKTNVGLHTASPGMVLTELLLSGSSIKNKQMFNIICELPETVARTLVPRMRVVKGSGKAVNYLTPPRILLAIVTSWLRRGRWFDDQGRALYAAEADRLRNWAENRTRLSLTDAMEMYTENTWVSVFSLSVVCAFIILQSTTPSSFPGT.

The transit peptide at Met-1–Arg-43 directs the protein to the chloroplast. 2 helical membrane passes run Tyr-105–Gly-125 and Leu-132–Val-152. Position 166 to 190 (Ile-166 to Val-190) interacts with NAD(+). Positions Ser-195–Leu-224 form a coiled coil. Tyr-330 (proton acceptor) is an active-site residue. A helical transmembrane segment spans residues Trp-470–Pro-490.

This sequence belongs to the short-chain dehydrogenases/reductases (SDR) family. In terms of assembly, interacts with NOL to form a complex that acts as a chlorophyll b reductase. Interacts with HCAR, RCCR, SGR1 and the LHCII complex. Part of a SGR1-CCE-LHCII complex, which acts in chlorophyll breakdown.

It localises to the plastid. The protein resides in the chloroplast thylakoid membrane. It catalyses the reaction 7(1)-hydroxychlorophyllide a + NAD(+) = chlorophyllide b + NADH + H(+). It carries out the reaction 7(1)-hydroxychlorophyllide a + NADP(+) = chlorophyllide b + NADPH + H(+). Functionally, involved in chlorophyll b degradation. Belongs to the chlorophyll catabolic enzymes (CCEs). The chain is Probable chlorophyll(ide) b reductase NYC1, chloroplastic (NYC1) from Arabidopsis thaliana (Mouse-ear cress).